The following is a 276-amino-acid chain: Diaminopimelate epimerase (276 aa).

Substrate contacts are provided by Asn-13, Gln-46, and Asn-66. Cys-75 serves as the catalytic Proton donor. Substrate contacts are provided by residues 76-77, Asn-159, Asn-192, and 210-211; these read GN and ER. Cys-219 acts as the Proton acceptor in catalysis. 220 to 221 provides a ligand contact to substrate; it reads GT.

It belongs to the diaminopimelate epimerase family. As to quaternary structure, homodimer.

The protein resides in the cytoplasm. It carries out the reaction (2S,6S)-2,6-diaminopimelate = meso-2,6-diaminopimelate. It functions in the pathway amino-acid biosynthesis; L-lysine biosynthesis via DAP pathway; DL-2,6-diaminopimelate from LL-2,6-diaminopimelate: step 1/1. In terms of biological role, catalyzes the stereoinversion of LL-2,6-diaminopimelate (L,L-DAP) to meso-diaminopimelate (meso-DAP), a precursor of L-lysine and an essential component of the bacterial peptidoglycan. The sequence is that of Diaminopimelate epimerase from Pseudoalteromonas translucida (strain TAC 125).